Consider the following 491-residue polypeptide: Protein nucleotidyltransferase YdiU (491 aa).

The ATP site is built by Gly-94, Gly-96, Arg-97, Lys-117, Asp-129, Gly-130, Arg-180, and Arg-187. The active-site Proton acceptor is Asp-256. Asn-257 and Asp-266 together coordinate Mg(2+). Asp-266 is an ATP binding site.

This sequence belongs to the SELO family. It depends on Mg(2+) as a cofactor. Requires Mn(2+) as cofactor.

It carries out the reaction L-seryl-[protein] + ATP = 3-O-(5'-adenylyl)-L-seryl-[protein] + diphosphate. It catalyses the reaction L-threonyl-[protein] + ATP = 3-O-(5'-adenylyl)-L-threonyl-[protein] + diphosphate. The enzyme catalyses L-tyrosyl-[protein] + ATP = O-(5'-adenylyl)-L-tyrosyl-[protein] + diphosphate. The catalysed reaction is L-histidyl-[protein] + UTP = N(tele)-(5'-uridylyl)-L-histidyl-[protein] + diphosphate. It carries out the reaction L-seryl-[protein] + UTP = O-(5'-uridylyl)-L-seryl-[protein] + diphosphate. It catalyses the reaction L-tyrosyl-[protein] + UTP = O-(5'-uridylyl)-L-tyrosyl-[protein] + diphosphate. Nucleotidyltransferase involved in the post-translational modification of proteins. It can catalyze the addition of adenosine monophosphate (AMP) or uridine monophosphate (UMP) to a protein, resulting in modifications known as AMPylation and UMPylation. The protein is Protein nucleotidyltransferase YdiU of Clostridium botulinum (strain 657 / Type Ba4).